The primary structure comprises 331 residues: Meiotic recombination protein W68 (331 aa).

In terms of domain architecture, Topo IIA-type catalytic spans 1–120 (MDEFSENIER…LGILAASKGL (120 aa)). The O-(5'-phospho-DNA)-tyrosine intermediate role is filled by tyrosine 81. Mg(2+)-binding residues include glutamate 167 and aspartate 221.

This sequence belongs to the TOP6A family. Mg(2+) is required as a cofactor.

Its subcellular location is the nucleus. The enzyme catalyses ATP-dependent breakage, passage and rejoining of double-stranded DNA.. Its function is as follows. Required for meiotic recombination. Together with mei-P22, mediates DNA cleavage that forms the double-strand breaks (DSB) that initiate meiotic recombination. The protein is Meiotic recombination protein W68 of Drosophila melanogaster (Fruit fly).